We begin with the raw amino-acid sequence, 339 residues long: Putative ABC transporter ATP-binding protein MG467 homolog (339 aa).

The interval Lys41 to Leu87 is disordered. Positions Lys42 to Lys53 are enriched in basic residues. Basic and acidic residues predominate over residues Val54–Lys68. Basic residues predominate over residues Lys74–Lys83. The ABC transporter domain occupies Ile112–Leu338. An ATP-binding site is contributed by Gly150–Thr157.

The protein belongs to the ABC transporter superfamily.

This Mycoplasma pneumoniae (strain ATCC 29342 / M129 / Subtype 1) (Mycoplasmoides pneumoniae) protein is Putative ABC transporter ATP-binding protein MG467 homolog.